The following is a 126-amino-acid chain: Holo-[acyl-carrier-protein] synthase (126 aa).

2 residues coordinate Mg(2+): Asp-9 and Glu-58.

This sequence belongs to the P-Pant transferase superfamily. AcpS family. Mg(2+) serves as cofactor.

The protein resides in the cytoplasm. The enzyme catalyses apo-[ACP] + CoA = holo-[ACP] + adenosine 3',5'-bisphosphate + H(+). Transfers the 4'-phosphopantetheine moiety from coenzyme A to a Ser of acyl-carrier-protein. This is Holo-[acyl-carrier-protein] synthase from Erwinia tasmaniensis (strain DSM 17950 / CFBP 7177 / CIP 109463 / NCPPB 4357 / Et1/99).